Here is a 246-residue protein sequence, read N- to C-terminus: UL16-binding protein 6 (246 aa).

The first 25 residues, 1-25 (MAAAAIPALLLCLPLLFLLFGWSRA), serve as a signal peptide directing secretion. The tract at residues 29 to 117 (DPHSLCYDIT…IQLENYTPKE (89 aa)) is MHC class I alpha-1 like. The cysteines at positions 50 and 66 are disulfide-linked. Asn-68 and Asn-82 each carry an N-linked (GlcNAc...) asparagine glycan. Residues 118–210 (PLTLQARMSC…MDSTLEPSAG (93 aa)) form an MHC class I alpha-2 like region. Cysteines 127 and 190 form a disulfide. The GPI-anchor amidated glycine moiety is linked to residue Gly-218. Residues 219 to 246 (TTQLRATATTLILCCLLIILPCFILPGI) constitute a propeptide, removed in mature form.

The protein belongs to the MHC class I family. In terms of assembly, interacts with KLRK1/NKG2D. (Microbial infection) In CMV-infected cells, interacts with the viral glycoprotein UL16; this interaction causes relocalization from the cell surface to the cytoplasm and prevents binding to and activation of KLRK1/NKG2D, providing CMV with an immune evasion mechanism. In terms of tissue distribution, widely expressed. Expressed in trachea. Constitutively expressed in peripheral blood mononuclear cells, including B-cells and natural killer cells, as well as CD4+ and CD8+ T-cells and monocytes. Tends to be up-regulated in various lymphoid malignancies, including chronic lymphocytic leukemia.

Its subcellular location is the cell membrane. It localises to the endoplasmic reticulum. Its function is as follows. Binds and activates the KLRK1/NKG2D receptor, mediating natural killer cell cytotoxicity. The polypeptide is UL16-binding protein 6 (RAET1L) (Homo sapiens (Human)).